Consider the following 843-residue polypeptide: MPLSYQHFRKLLLLDDEAGPLEEELPRLADEGLNRRVAEDLNLGNLNVSIPWTHKVGNFTGLYSSTVPVFNPEWQTPSFPNIHLQEDIINRCQQYVGPLTVNEKRRLKLIMPARFYPNLTKYLPLDKGIKPYYPEHAVNHYFKTRHYLHTLWKAGILYKRETTRSASFCGSPYSWEQELQHGRLVFQTSTRHGDESFCSQSSGILSRSPVGPCIRSQLKQSRLGLQPQQGSLARGKSGRSGSIWARVHSTTRRSFGVEPSGSGHIDNSASSASSCLYQSAVRKTAYSHLSTSKRQSSSGHAVELHNIPPSCARSQSEGPISSCWWLQFRNSEPCSDYCLTHIVNLLEDWGPCTEHGEHNIRIPRTPARVTGGVFLVDKNPHNTTESRLVVDFSQFSRGSTHVSWPKFAVPNLQSLTNLLSSNLSWLSLDVSAAFYHIPLHPAAMPHLLVGSSGLPRYVARLSSTSRNINYQHGTMQDLHDSCSRNLYVSLLLLYKTFGRKLHLYSHPIILGFRKIPMGVGLSPFLLAQFTSAICSVVRRAFPHCLAFSYMDDVVLGAKSVQHLESLFTSITNFLLSLGIHLNPHKTKRWGYSLNFMGYVIGSWGTLPQEHIVLKIKQCFRKLPVNRPIDWKVCQRIVGLLGFAAPFTQCGYPALMPLYACIQSKQAFTFSPTYKAFLCKQYLHLYPVARQRSGLCQVFADATPTGWGLAIGQSGMRGTFVAPLPIHTAELLAACFARSRSGAKLIGTDNSVVLSRKYTSFPWLLGCAANWILRGTSFVYVPSALNPADDPSRGRLGLYRPLLHLPFRPTTGRASLYAVSPSVPSHLPVRVHFASPLHVAWRPP.

The terminal protein domain (TP) stretch occupies residues 1–177 (MPLSYQHFRK…FCGSPYSWEQ (177 aa)). The tract at residues 178-346 (ELQHGRLVFQ…YCLTHIVNLL (169 aa)) is spacer. The interval 347 to 690 (EDWGPCTEHG…YLHLYPVARQ (344 aa)) is polymerase/reverse transcriptase domain (RT). Residues 357-600 (EHNIRIPRTP…YSLNFMGYVI (244 aa)) enclose the Reverse transcriptase domain. The Mg(2+) site is built by Asp429, Asp551, and Asp552.

This sequence belongs to the hepadnaviridae P protein family.

The catalysed reaction is DNA(n) + a 2'-deoxyribonucleoside 5'-triphosphate = DNA(n+1) + diphosphate. It catalyses the reaction Endonucleolytic cleavage to 5'-phosphomonoester.. Its activity is regulated as follows. Activated by host HSP70 and HSP40 in vitro to be able to bind the epsilon loop of the pgRNA. Because deletion of the RNase H region renders the protein partly chaperone-independent, the chaperones may be needed indirectly to relieve occlusion of the RNA-binding site by this domain. Inhibited by several reverse-transcriptase inhibitors: Lamivudine, Adefovir and Entecavir. Its function is as follows. Multifunctional enzyme that converts the viral RNA genome into dsDNA in viral cytoplasmic capsids. This enzyme displays a DNA polymerase activity that can copy either DNA or RNA templates, and a ribonuclease H (RNase H) activity that cleaves the RNA strand of RNA-DNA heteroduplexes in a partially processive 3'- to 5'-endonucleasic mode. Neo-synthesized pregenomic RNA (pgRNA) are encapsidated together with the P protein, and reverse-transcribed inside the nucleocapsid. Initiation of reverse-transcription occurs first by binding the epsilon loop on the pgRNA genome, and is initiated by protein priming, thereby the 5'-end of (-)DNA is covalently linked to P protein. Partial (+)DNA is synthesized from the (-)DNA template and generates the relaxed circular DNA (RC-DNA) genome. After budding and infection, the RC-DNA migrates in the nucleus, and is converted into a plasmid-like covalently closed circular DNA (cccDNA). The activity of P protein does not seem to be necessary for cccDNA generation, and is presumably released from (+)DNA by host nuclear DNA repair machinery. The chain is Protein P from Hepatitis B virus genotype C subtype adr (isolate Japan/Nishioka/1983) (HBV-C).